Consider the following 802-residue polypeptide: Epithelial sodium channel subunit delta (802 aa).

At 1 to 250 (MRAVLSQKTT…CSRGNRLKTT (250 aa)) the chain is on the cytoplasmic side. A disordered region spans residues 145-211 (KQPHGGALTS…PPPPKEGHQE (67 aa)). Basic residues predominate over residues 166–176 (CHLKGWQHRPT). Residues 192–205 (PPRPGPPSAPPPPP) show a composition bias toward pro residues. The chain crosses the membrane as a helical span at residues 251–271 (SWGLLSLGALVALCWQLGLLF). The Extracellular segment spans residues 272–694 (ERHWHRPVLM…VPQLLSAMGS (423 aa)). Asn330 and Asn548 each carry an N-linked (GlcNAc...) asparagine glycan. A helical membrane pass occupies residues 695 to 715 (LCSLWFGASVLSLLELLELLL). Residues 716-802 (DASALTLVLG…GPQPLETLDT (87 aa)) are Cytoplasmic-facing. Residues 738–777 (RASPASGASSIKPEASQMPPPAGGTSDDPEPSGPHLPRVM) are disordered.

The protein belongs to the amiloride-sensitive sodium channel (TC 1.A.6) family. SCNN1D subfamily. In terms of assembly, can form an alternative heterotrimeric epithelial sodium channel (ENaC), composed of a delta (SCNN1D), beta (SCNN1B), and gamma (SCNN1G) subunit, where the delta (SCNN1D) subunit replaces the alpha (SCNN1A) subunit. As to expression, not specifically expressed in epithelial cells.

The protein resides in the apical cell membrane. It catalyses the reaction Na(+)(in) = Na(+)(out). Originally identified and characterized by its inhibition by the diuretic drug amiloride. In terms of biological role, potential alternative pore-forming subunit of the epithelial sodium channel (ENaC), capable of replacing the alpha/SCNN1A subunit, creating a more active channel with distinct properties. ENaC functions in epithelial tissues, where it facilitates the electrodiffusion of sodium ions from the extracellular fluid through the apical membrane of cells, with water following osmotically, regulating sodium balance and fluid homeostasis. This subunit could also function independently as a sodium channel or assemble into other tissue-specific heterotrimeric sodium channels. Functionally, ENaC channels including this isoform exhibit greater conductance. In Homo sapiens (Human), this protein is Epithelial sodium channel subunit delta.